The sequence spans 198 residues: SCO2-like protein RF_0043 (198 aa).

This sequence belongs to the SCO1/2 family.

This chain is SCO2-like protein RF_0043, found in Rickettsia felis (strain ATCC VR-1525 / URRWXCal2) (Rickettsia azadi).